Reading from the N-terminus, the 480-residue chain is UDP-N-acetylmuramoylalanine--D-glutamate ligase (480 aa).

110 to 116 (GTNGKST) is a binding site for ATP.

It belongs to the MurCDEF family.

It localises to the cytoplasm. The enzyme catalyses UDP-N-acetyl-alpha-D-muramoyl-L-alanine + D-glutamate + ATP = UDP-N-acetyl-alpha-D-muramoyl-L-alanyl-D-glutamate + ADP + phosphate + H(+). Its pathway is cell wall biogenesis; peptidoglycan biosynthesis. Functionally, cell wall formation. Catalyzes the addition of glutamate to the nucleotide precursor UDP-N-acetylmuramoyl-L-alanine (UMA). The polypeptide is UDP-N-acetylmuramoylalanine--D-glutamate ligase (Synechococcus sp. (strain JA-2-3B'a(2-13)) (Cyanobacteria bacterium Yellowstone B-Prime)).